Consider the following 577-residue polypeptide: Arginine--tRNA ligase (577 aa).

Residues 122–132 (PNVAKEMHVGH) carry the 'HIGH' region motif.

It belongs to the class-I aminoacyl-tRNA synthetase family. As to quaternary structure, monomer.

The protein localises to the cytoplasm. The enzyme catalyses tRNA(Arg) + L-arginine + ATP = L-arginyl-tRNA(Arg) + AMP + diphosphate. This chain is Arginine--tRNA ligase, found in Vibrio vulnificus (strain CMCP6).